Reading from the N-terminus, the 332-residue chain is Polygalacturonase inhibitor 1 (332 aa).

The first 24 residues, 1–24 (MASTASFMLAVLLAVAVAAAPARA), serve as a signal peptide directing secretion. Disulfide bonds link C27–C58 and C59–C66. 10 LRR repeats span residues 72 to 96 (VNNVFIDGANDVRGQIPSAVAGLTA), 97 to 118 (LMSLSLFRLPGLSGPIPACLTA), 119 to 142 (LSNLQFLTISHTNVSGVIPDSLAR), 143 to 166 (IRSLDSVDLSHNSLTGPIPNSFSD), 167 to 192 (LPNLRSLDLRSNKLTGCIPAGLVQGQ), 193 to 215 (FRSLILSYNQLTGPIPRDDAQDE), 216 to 236 (INTVDLSHNRLTGDASFLFAA), 237 to 259 (GRPIGKVDLSWNDLDFDLSKLVF), 260 to 283 (PPELTYLDLSHNRIRGTVPRSLAA), and 284 to 310 (LSTLQTLDLSYNRLCGPLPRLHGVIRH). N-linked (GlcNAc...) asparagine glycosylation is present at N131. 3 disulfides stabilise this stretch: C298–C312, C298–C320, and C320–C329.

The protein belongs to the polygalacturonase-inhibiting protein family. As to expression, highly expressed in calli, immature and mature panicles, and in three inner floral organs: lodicules, stamens and carpels. Expressed at low level in seedling roots and mature stems.

The protein localises to the secreted. The protein resides in the cell wall. Functionally, inhibitor of fungal polygalacturonase. Regulates floral organ number. This chain is Polygalacturonase inhibitor 1, found in Oryza sativa subsp. japonica (Rice).